The primary structure comprises 267 residues: MTKVALLIAYQGTAYSGWQQQPNDLSIQEVIESSLKKITKTRTPLIASGRTDAGVHAYGQVAHFRAPDHPLFANANLTKKALNAILPKDIVIRDVALFDDNFHARYLTIAKEYRYSLSRLAKPLPWQRHFCYTPRHPFSTELMQEGANLLIGTHDFASFANHGRDYNSTVRTIYTLDIVDKGDSLSIICRGNGFLYKMVRNLVGALLDVGKGAYPPEHLLDILEQKNRREGPSAAPAYGLSLHHVCYSSPYNNFCCEQCSVSTSNEG.

The active-site Nucleophile is aspartate 52. Residue tyrosine 113 coordinates substrate.

It belongs to the tRNA pseudouridine synthase TruA family. Homodimer.

It catalyses the reaction uridine(38/39/40) in tRNA = pseudouridine(38/39/40) in tRNA. Its function is as follows. Formation of pseudouridine at positions 38, 39 and 40 in the anticodon stem and loop of transfer RNAs. This Chlamydia pneumoniae (Chlamydophila pneumoniae) protein is tRNA pseudouridine synthase A.